The primary structure comprises 146 residues: D-aminoacyl-tRNA deacylase (146 aa).

The Gly-cisPro motif, important for rejection of L-amino acids motif lies at 137–138 (GP).

This sequence belongs to the DTD family. As to quaternary structure, homodimer.

The protein localises to the cytoplasm. The catalysed reaction is glycyl-tRNA(Ala) + H2O = tRNA(Ala) + glycine + H(+). It catalyses the reaction a D-aminoacyl-tRNA + H2O = a tRNA + a D-alpha-amino acid + H(+). Its function is as follows. An aminoacyl-tRNA editing enzyme that deacylates mischarged D-aminoacyl-tRNAs. Also deacylates mischarged glycyl-tRNA(Ala), protecting cells against glycine mischarging by AlaRS. Acts via tRNA-based rather than protein-based catalysis; rejects L-amino acids rather than detecting D-amino acids in the active site. By recycling D-aminoacyl-tRNA to D-amino acids and free tRNA molecules, this enzyme counteracts the toxicity associated with the formation of D-aminoacyl-tRNA entities in vivo and helps enforce protein L-homochirality. This chain is D-aminoacyl-tRNA deacylase, found in Bacillus cereus (strain B4264).